Here is a 457-residue protein sequence, read N- to C-terminus: 1-carboxybiuret hydrolase subunit AtzE (457 aa).

Catalysis depends on charge relay system residues Lys-74 and Ser-150. The Acyl-ester intermediate role is filled by Ser-174.

This sequence belongs to the amidase family. In terms of assembly, heterotetramer consisting of 2 AtzE and 2 AtzG subunits.

The catalysed reaction is 1-carboxybiuret + H2O = urea-1,3-dicarboxylate + NH4(+). It functions in the pathway xenobiotic degradation; atrazine degradation. Hydrolyzes 1-carboxybiuret to urea-1,3-dicarboxylate and NH(3). The sequence is that of 1-carboxybiuret hydrolase subunit AtzE from Pseudomonas sp. (strain ADP).